The sequence spans 457 residues: tRNA-2-methylthio-N(6)-dimethylallyladenosine synthase (457 aa).

One can recognise an MTTase N-terminal domain in the interval 3–120; sequence KKVYVKTFGC…LPQMIDARRA (118 aa). Residues Cys12, Cys49, Cys83, Cys157, Cys161, and Cys164 each coordinate [4Fe-4S] cluster. Positions 143 to 377 constitute a Radical SAM core domain; sequence RVEGPSAFVS…QATIEENVAR (235 aa). The TRAM domain maps to 380–447; sequence QSMVGKVERI…PHSLRGELLL (68 aa).

Belongs to the methylthiotransferase family. MiaB subfamily. In terms of assembly, monomer. It depends on [4Fe-4S] cluster as a cofactor.

It localises to the cytoplasm. The enzyme catalyses N(6)-dimethylallyladenosine(37) in tRNA + (sulfur carrier)-SH + AH2 + 2 S-adenosyl-L-methionine = 2-methylsulfanyl-N(6)-dimethylallyladenosine(37) in tRNA + (sulfur carrier)-H + 5'-deoxyadenosine + L-methionine + A + S-adenosyl-L-homocysteine + 2 H(+). In terms of biological role, catalyzes the methylthiolation of N6-(dimethylallyl)adenosine (i(6)A), leading to the formation of 2-methylthio-N6-(dimethylallyl)adenosine (ms(2)i(6)A) at position 37 in tRNAs that read codons beginning with uridine. In Burkholderia vietnamiensis (strain G4 / LMG 22486) (Burkholderia cepacia (strain R1808)), this protein is tRNA-2-methylthio-N(6)-dimethylallyladenosine synthase.